The chain runs to 328 residues: BURP domain-containing protein 11 (328 aa).

In terms of domain architecture, BURP spans 74–318 (FFFRDALRPG…TKLSIVWVPR (245 aa)).

Expressed in roots.

This chain is BURP domain-containing protein 11 (BURP11), found in Oryza sativa subsp. japonica (Rice).